The following is an 884-amino-acid chain: Alanine--tRNA ligase (884 aa).

His-572, His-576, Cys-673, and His-677 together coordinate Zn(2+).

Belongs to the class-II aminoacyl-tRNA synthetase family. Zn(2+) is required as a cofactor.

It is found in the cytoplasm. It carries out the reaction tRNA(Ala) + L-alanine + ATP = L-alanyl-tRNA(Ala) + AMP + diphosphate. Its function is as follows. Catalyzes the attachment of alanine to tRNA(Ala) in a two-step reaction: alanine is first activated by ATP to form Ala-AMP and then transferred to the acceptor end of tRNA(Ala). Also edits incorrectly charged Ser-tRNA(Ala) and Gly-tRNA(Ala) via its editing domain. This chain is Alanine--tRNA ligase, found in Xylella fastidiosa (strain M23).